Here is a 345-residue protein sequence, read N- to C-terminus: Membrane progestin receptor gamma-A (345 aa).

The Cytoplasmic portion of the chain corresponds to 1 to 52 (MLNLIKLPQVFTINQVPKVFHEDGIISGYRHPCSSAKDCVLSLFQLTNETLN). The helical transmembrane segment at 53 to 73 (IWTHFLPTWFFLWKLLTVVLV) threads the bilayer. The Extracellular portion of the chain corresponds to 74 to 80 (LEDWRDP). A helical transmembrane segment spans residues 81-101 (FIWPFLVFLLSCCVYPLASSC). At 102 to 114 (AHTFSTMSERARH) the chain is on the cytoplasmic side. Residues 115 to 135 (ICFFFDYGALSFYSLGSAIIY) traverse the membrane as a helical segment. Topologically, residues 136-148 (SSYSFPDKWVNGT) are extracellular. Residues 149–169 (FHLNYVSIAVVNSIISTALAC) form a helical membrane-spanning segment. Over 170–201 (YSRLGLPFLEYNCHSIKRPSGKLDQKLCKCLR) the chain is Cytoplasmic. Residues 202–222 (IIAFVYPYLFDNIPLFYRIFV) traverse the membrane as a helical segment. Topologically, residues 223 to 272 (CAGEGCTVNEANTVHYQHTSLAFFTGFLFATHLPERLAPGSFDYIGHSHQ) are extracellular. The chain crosses the membrane as a helical span at residues 273 to 293 (LFHVFAIIGTYFQMTAIELDM). Topologically, residues 294–314 (AARKQWLHAHLPPVTFLNTVG) are cytoplasmic. A helical membrane pass occupies residues 315 to 335 (AAFFSVVSGLCIVYVFSLSLF). Over 336–345 (STRGVKNKSF) the chain is Extracellular.

It belongs to the ADIPOR family.

It localises to the membrane. Its function is as follows. Steroid membrane receptor. Binds progesterone. May be involved in oocyte maturation. The chain is Membrane progestin receptor gamma-A (paqr5a) from Danio rerio (Zebrafish).